The following is a 469-amino-acid chain: 6-phosphogluconate dehydrogenase, NADP(+)-dependent, decarboxylating (469 aa).

NADP(+)-binding positions include 10–15 (GLAVMG), 33–35 (NRS), 74–76 (VKA), and Asn-102. Substrate is bound by residues Asn-102 and 128–130 (SGG). Residue Lys-182 is the Proton acceptor of the active site. Position 185–186 (185–186 (HN)) interacts with substrate. Glu-189 (proton donor) is an active-site residue. Residues Tyr-190, Lys-260, Arg-287, Arg-446, and His-452 each coordinate substrate.

Belongs to the 6-phosphogluconate dehydrogenase family. Homodimer.

The catalysed reaction is 6-phospho-D-gluconate + NADP(+) = D-ribulose 5-phosphate + CO2 + NADPH. It functions in the pathway carbohydrate degradation; pentose phosphate pathway; D-ribulose 5-phosphate from D-glucose 6-phosphate (oxidative stage): step 3/3. In terms of biological role, catalyzes the oxidative decarboxylation of 6-phosphogluconate to ribulose 5-phosphate and CO(2), with concomitant reduction of NADP to NADPH. Is the predominant 6-P-gluconate dehydrogenase isoenzyme in B.subtilis during growth on glucose and gluconate. This chain is 6-phosphogluconate dehydrogenase, NADP(+)-dependent, decarboxylating (gndA), found in Bacillus subtilis (strain 168).